The chain runs to 95 residues: Aspartyl/glutamyl-tRNA(Asn/Gln) amidotransferase subunit C (95 aa).

This sequence belongs to the GatC family. As to quaternary structure, heterotrimer of A, B and C subunits.

It catalyses the reaction L-glutamyl-tRNA(Gln) + L-glutamine + ATP + H2O = L-glutaminyl-tRNA(Gln) + L-glutamate + ADP + phosphate + H(+). It carries out the reaction L-aspartyl-tRNA(Asn) + L-glutamine + ATP + H2O = L-asparaginyl-tRNA(Asn) + L-glutamate + ADP + phosphate + 2 H(+). Allows the formation of correctly charged Asn-tRNA(Asn) or Gln-tRNA(Gln) through the transamidation of misacylated Asp-tRNA(Asn) or Glu-tRNA(Gln) in organisms which lack either or both of asparaginyl-tRNA or glutaminyl-tRNA synthetases. The reaction takes place in the presence of glutamine and ATP through an activated phospho-Asp-tRNA(Asn) or phospho-Glu-tRNA(Gln). This chain is Aspartyl/glutamyl-tRNA(Asn/Gln) amidotransferase subunit C, found in Campylobacter fetus subsp. fetus (strain 82-40).